A 260-amino-acid chain; its full sequence is Uroplakin-1b (260 aa).

Over 1-15 (MAKDDSTVRCFQGLL) the chain is Cytoplasmic. A helical membrane pass occupies residues 16–36 (IFGHVIVGMCGIALTAECIFF). Residues 37 to 59 (VSDQHSLYPLLEATNNDDIFGAA) are Extracellular-facing. The helical transmembrane segment at 60-80 (WIGMFVGICLFCLSVLAIVGI) threads the bilayer. At 81-86 (MKSNRK) the chain is on the cytoplasmic side. Residues 87 to 107 (ILLAYFIMMFIVYGFEVASCI) traverse the membrane as a helical segment. The Extracellular portion of the chain corresponds to 108–229 (TAATQRDFFT…ELISGPMDRH (122 aa)). A helical transmembrane segment spans residues 230-250 (AWGVAWFGFAILCWTFWVLLG). The Cytoplasmic portion of the chain corresponds to 251–260 (TMFYWSRIEY).

This sequence belongs to the tetraspanin (TM4SF) family. Heterodimer with uroplakin-3A (UPK3A) or uroplakin-3B (UPK3B). Post-translationally, N-glycosylated with high-mannose oligosaccharides. Bladder epithelium.

Its subcellular location is the membrane. Its function is as follows. Component of the asymmetric unit membrane (AUM); a highly specialized biomembrane elaborated by terminally differentiated urothelial cells. May play an important role in normal bladder epithelial physiology, possibly in regulating membrane permeability of superficial umbrella cells or in stabilizing the apical membrane through AUM/cytoskeletal interactions. This chain is Uroplakin-1b (Upk1b), found in Mus musculus (Mouse).